The sequence spans 170 residues: UPF0260 protein RPE_1881 (170 aa).

Belongs to the UPF0260 family.

The protein is UPF0260 protein RPE_1881 of Rhodopseudomonas palustris (strain BisA53).